The sequence spans 150 residues: Transmembrane protein PMIS2 (150 aa).

A compositionally biased stretch (low complexity) spans 1–12; sequence MALKPPSATQPA. A disordered region spans residues 1–61; that stretch reads MALKPPSATQ…EPQEPTQTPE (61 aa). The span at 13-22 shows a compositional bias: pro residues; it reads PNAPATPDAP. Residues 23–61 show a composition bias toward low complexity; sequence PTTGDPGASAAPGSPTTTGGPGAPAEVPQEPQEPTQTPE. 2 helical membrane-spanning segments follow: residues 71–91 and 130–150; these read LCLT…ALYF and GWFG…LVLY.

This sequence belongs to the CD225/Dispanin family.

It is found in the membrane. In terms of biological role, may play a role in spermatozoa mobility. In Homo sapiens (Human), this protein is Transmembrane protein PMIS2.